Consider the following 447-residue polypeptide: Glycylpeptide N-tetradecanoyltransferase (447 aa).

Tetradecanoyl-CoA contacts are provided by residues 38-41 (YKFW), 171-173 (LCV), and 179-183 (SKRLA). L447 serves as the catalytic Proton acceptor; via carboxylate.

Belongs to the NMT family. In terms of assembly, monomer.

It is found in the cytoplasm. The catalysed reaction is N-terminal glycyl-[protein] + tetradecanoyl-CoA = N-tetradecanoylglycyl-[protein] + CoA + H(+). In terms of biological role, adds a myristoyl group to the N-terminal glycine residue of certain cellular proteins. This chain is Glycylpeptide N-tetradecanoyltransferase (NMT1), found in Kluyveromyces lactis (strain ATCC 8585 / CBS 2359 / DSM 70799 / NBRC 1267 / NRRL Y-1140 / WM37) (Yeast).